The sequence spans 137 residues: uncharacterized protein (137 aa).

This is an uncharacterized protein from Acidianus convivator (ATV).